The primary structure comprises 313 residues: MAQIALCCTSHSPLLNLPGPSRELLDDIGSALAVARDFVTEFDPDLVVTFSPDHYNGFFYKVMPPFCVGTSAQGVGDYGTHAGPLDVPEDLANELATAVLEAGVDVAISASMDVDHGTVQPLQNLFGDAMARPVIPVFINSVATPLGPLRRTRALGTAIGRYLATLDKRVLVIGSGGLSHDPPVPTLATAPPAALDRIVHGAPMSTEQRMARQSAVIDAAHAFAHGESPLQPLNPAWDATFLEILDEGWLSDLDGWSNAFIAREGGNSAHEIRTWVAAFAALAAGGDYRTGLRFYRAAPELIAGFAIRTAVLA.

Residue H116 is the Proton donor of the active site. The active-site Proton acceptor is H180.

Belongs to the LigB/MhpB extradiol dioxygenase family. As to quaternary structure, homotetramer. The cofactor is Fe(2+).

It catalyses the reaction 3-(2,3-dihydroxyphenyl)propanoate + O2 = (2Z,4E)-2-hydroxy-6-oxonona-2,4-dienedioate + H(+). The catalysed reaction is (2E)-3-(2,3-dihydroxyphenyl)prop-2-enoate + O2 = (2Z,4E,7E)-2-hydroxy-6-oxonona-2,4,7-trienedioate + H(+). It participates in aromatic compound metabolism; 3-phenylpropanoate degradation. In terms of biological role, catalyzes the non-heme iron(II)-dependent oxidative cleavage of 2,3-dihydroxyphenylpropionic acid and 2,3-dihydroxicinnamic acid into 2-hydroxy-6-ketononadienedioate and 2-hydroxy-6-ketononatrienedioate, respectively. The chain is 2,3-dihydroxyphenylpropionate/2,3-dihydroxicinnamic acid 1,2-dioxygenase from Mycobacterium sp. (strain MCS).